Here is a 356-residue protein sequence, read N- to C-terminus: MTPLNNDRFLRALLRQPVDVTPVWMMRQAGRYLPEYRATRARAGDFMGLCTNPELACEVTLQPLERYPLDAAILFSDILTIPDAMGLGLYFETGEGPKFHKAVRTEADVNALKVINPEQDLPYVVNAVKTIRRELNGRVPLIGFSGSPWTLATYMIEGGSSRDFRRAKEMLYNQPEVMHRLLDVLAESVIVYLNAQIRAGAQAVQIFDTWGGALSHNAYREFSLKYMEKIVAGLIGEHEGRQVPVILFTKGGGQWLDAMADTGATALGLDWTTDIAAARARVGNRVALQGNMDPGILYASPERIRAEVGNILAAYGQGSGHIFNLGHGITPEVDPEHAGAFIRAVHDLSAQYHTAG.

Residues 27 to 31 (RQAGR), Asp-77, Tyr-154, Thr-209, and His-327 each bind substrate.

The protein belongs to the uroporphyrinogen decarboxylase family. As to quaternary structure, homodimer.

The protein resides in the cytoplasm. The enzyme catalyses uroporphyrinogen III + 4 H(+) = coproporphyrinogen III + 4 CO2. The protein operates within porphyrin-containing compound metabolism; protoporphyrin-IX biosynthesis; coproporphyrinogen-III from 5-aminolevulinate: step 4/4. Functionally, catalyzes the decarboxylation of four acetate groups of uroporphyrinogen-III to yield coproporphyrinogen-III. The sequence is that of Uroporphyrinogen decarboxylase from Cellvibrio japonicus (strain Ueda107) (Pseudomonas fluorescens subsp. cellulosa).